The primary structure comprises 266 residues: Gap junction beta-4 protein (266 aa).

Residues 2 to 13 (NWAFLQGLLSGV) lie within the membrane without spanning it. Residues 14 to 20 (NKYSTVL) lie on the Cytoplasmic side of the membrane. Residues 21 to 40 (SRIWLSVVFIFRVLVYVVAA) traverse the membrane as a helical segment. The Extracellular segment spans residues 41-73 (EEVWDDEQKDFVCNTKQPGCPNVCYDEFFPVSH). 3 disulfides stabilise this stretch: C53–C175, C60–C169, and C64–C164. A helical membrane pass occupies residues 74 to 94 (VRLWALQLILVTCPSLLVVMH). Residues 95–130 (VAYREERERKHHLKHGPNAPSLYDNLSKKRGGLWWT) lie on the Cytoplasmic side of the membrane. Residues 131-151 (YLLSLIFKAAVDAGFLYIFHR) traverse the membrane as a helical segment. Residues 152–184 (LYKDYDMPRVVACSVEPCPHTVDCYISRPTEKK) are Extracellular-facing. A helical transmembrane segment spans residues 185-205 (VFTYFMVTTAAICILLNLSEV). Over 206-266 (FYLVGKRCME…SAPVDAGGYP (61 aa)) the chain is Cytoplasmic.

The protein belongs to the connexin family. Beta-type (group I) subfamily. As to quaternary structure, a hemichannel or connexon is composed of a hexamer of connexins. A functional gap junction is formed by the apposition of two hemichannels. Forms heteromeric channels with GJB2.

Its subcellular location is the cell membrane. The protein resides in the cell junction. It is found in the gap junction. Its function is as follows. Structural component of gap junctions. Gap junctions are dodecameric channels that connect the cytoplasm of adjoining cells. They are formed by the docking of two hexameric hemichannels, one from each cell membrane. Small molecules and ions diffuse from one cell to a neighboring cell via the central pore. This Homo sapiens (Human) protein is Gap junction beta-4 protein (GJB4).